The chain runs to 256 residues: Hydroxyacylglutathione hydrolase (256 aa).

Residues His53, His55, Asp57, His58, His113, Asp130, and His168 each coordinate Zn(2+).

Belongs to the metallo-beta-lactamase superfamily. Glyoxalase II family. As to quaternary structure, monomer. Requires Zn(2+) as cofactor.

It catalyses the reaction an S-(2-hydroxyacyl)glutathione + H2O = a 2-hydroxy carboxylate + glutathione + H(+). Its pathway is secondary metabolite metabolism; methylglyoxal degradation; (R)-lactate from methylglyoxal: step 2/2. Its function is as follows. Thiolesterase that catalyzes the hydrolysis of S-D-lactoyl-glutathione to form glutathione and D-lactic acid. In Tolumonas auensis (strain DSM 9187 / NBRC 110442 / TA 4), this protein is Hydroxyacylglutathione hydrolase.